Here is a 173-residue protein sequence, read N- to C-terminus: Catabolic 3-dehydroquinase (173 aa).

Tyr26 serves as the catalytic Proton acceptor. 3 residues coordinate substrate: Asn102, His108, and Asp115. The active-site Proton donor is His128. Residues 129–130 (VS) and Arg139 contribute to the substrate site.

It belongs to the type-II 3-dehydroquinase family. As to quaternary structure, homododecamer. Adopts a ring-like structure, composed of an arrangement of two hexameric rings stacked on top of one another.

It carries out the reaction 3-dehydroquinate = 3-dehydroshikimate + H2O. It functions in the pathway aromatic compound metabolism; 3,4-dihydroxybenzoate biosynthesis; 3,4-dihydroxybenzoate from 3-dehydroquinate: step 1/2. Its function is as follows. 3-dehydroquinate dehydratase; part of the qa gene cluster that mediates the catabolism of quinic acid (QA) and as such, allows the use of QA as a sole carbon source. Catalyzes the second reaction in the inducible quinic acid catabolic pathway by converting 3-dehydroquinate into 3-dehydroshikimate. The qa cluster encodes 3 inducible enymes (qa-2, qa-3 and qa-4) catalyzing the first three reactions in the catabolism of quinic acid to protocatechuic acid (also known as 3,4-Dihydroxybenzoic acid). This is Catabolic 3-dehydroquinase from Neurospora crassa (strain ATCC 24698 / 74-OR23-1A / CBS 708.71 / DSM 1257 / FGSC 987).